The sequence spans 449 residues: MATRSQNVAAAPQPPQNRGNVAALGKQKAVVAGRPDAKNRRALGEIGNVMNVRLPEGKPLQQAPAGRTANFGAQLLKNAQANAAANKQNAVAPAAVARPAQRQARKAPVKPAPPPPEHVIEISSDSDQSMRQQSEGSASSVRKCSRKKVINTLTSVLTARSKVACGITDKPREVIEDIDKLDGDNELAVVDYIEDIYKFYKVAENECRPCDYIDTQVEINSKMRAILADWIIEVHHKFELMPETLYLSMYVIDRYLSMQQVQRRELQLVGVSAMLIACKYEEIWAPEVNDFILISDSAYTREQILAMEKGILNKLQWNLTVPTAYVFIMRYLKAGASADNKSDKEMEHMAFFFAELALMQYGLVASLPSKVAASAVYAARLTLKKSPLWTDTLKHHTGFTESQLLDSAKLLVTSHSTAPESKLRVVYKKYSSEQLGGVALRSPAVELCK.

2 disordered regions span residues 1 to 34 and 90 to 143; these read MATRSQNVAAAPQPPQNRGNVAALGKQKAVVAGR and AVAP…SVRK. 2 stretches are compositionally biased toward low complexity: residues 90–102 and 121–134; these read AVAPAAVARPAQR and EISSDSDQSMRQQS.

The protein belongs to the cyclin family. Cyclin AB subfamily.

The sequence is that of Cyclin-B1-1 (CYCB1-1) from Oryza sativa subsp. japonica (Rice).